A 333-amino-acid chain; its full sequence is Tetraacyldisaccharide 4'-kinase (333 aa).

55–62 (TIGGNGKT) provides a ligand contact to ATP.

Belongs to the LpxK family.

The catalysed reaction is a lipid A disaccharide + ATP = a lipid IVA + ADP + H(+). Its pathway is glycolipid biosynthesis; lipid IV(A) biosynthesis; lipid IV(A) from (3R)-3-hydroxytetradecanoyl-[acyl-carrier-protein] and UDP-N-acetyl-alpha-D-glucosamine: step 6/6. Transfers the gamma-phosphate of ATP to the 4'-position of a tetraacyldisaccharide 1-phosphate intermediate (termed DS-1-P) to form tetraacyldisaccharide 1,4'-bis-phosphate (lipid IVA). This is Tetraacyldisaccharide 4'-kinase from Blochmanniella floridana.